The following is a 403-amino-acid chain: Putative transport protein TP_0553 (403 aa).

Helical transmembrane passes span 10–30 (ISLF…FVPY), 31–51 (LTVL…YRAL), 92–112 (AAVF…FIAI), 202–222 (LYFF…ALPL), 243–263 (KGLF…YGIF), 271–291 (LAML…CVWL), 293–313 (VGIS…LFVA), and 350–370 (TFGF…FTVI).

This sequence belongs to the autoinducer-2 exporter (AI-2E) (TC 2.A.86) family.

It is found in the cell membrane. In Treponema pallidum (strain Nichols), this protein is Putative transport protein TP_0553.